Consider the following 209-residue polypeptide: Cilia- and flagella-associated protein 418 (209 aa).

The tract at residues 1-76 (MAKDLDELLD…LINEIFEEPD (76 aa)) is required for interaction with FAM161A. Residues 24 to 58 (LDLGERPKGDGGGGSHSGDRNGAQEKETLRSTETF) are disordered. Residues 40–58 (SGDRNGAQEKETLRSTETF) show a composition bias toward basic and acidic residues.

In terms of assembly, interacts (via N-terminus) with FAM161A (via central region); the interaction is direct. Expressed in multiple tissues, including the brain, kidney, lung, spleen, heart, trachea and testis. Expressed in the retina (at protein level).

It is found in the cytoplasm. The protein localises to the photoreceptor inner segment. Its function is as follows. May be involved in photoreceptor outer segment disk morphogenesis. This chain is Cilia- and flagella-associated protein 418, found in Mus musculus (Mouse).